A 199-amino-acid polypeptide reads, in one-letter code: dTTP/UTP pyrophosphatase (199 aa).

Aspartate 78 (proton acceptor) is an active-site residue.

It belongs to the Maf family. YhdE subfamily. It depends on a divalent metal cation as a cofactor.

It is found in the cytoplasm. The enzyme catalyses dTTP + H2O = dTMP + diphosphate + H(+). The catalysed reaction is UTP + H2O = UMP + diphosphate + H(+). Nucleoside triphosphate pyrophosphatase that hydrolyzes dTTP and UTP. May have a dual role in cell division arrest and in preventing the incorporation of modified nucleotides into cellular nucleic acids. In Clostridium acetobutylicum (strain ATCC 824 / DSM 792 / JCM 1419 / IAM 19013 / LMG 5710 / NBRC 13948 / NRRL B-527 / VKM B-1787 / 2291 / W), this protein is dTTP/UTP pyrophosphatase.